The sequence spans 116 residues: Large ribosomal subunit protein bL20 (116 aa).

This sequence belongs to the bacterial ribosomal protein bL20 family.

Its function is as follows. Binds directly to 23S ribosomal RNA and is necessary for the in vitro assembly process of the 50S ribosomal subunit. It is not involved in the protein synthesizing functions of that subunit. The protein is Large ribosomal subunit protein bL20 of Phocaeicola vulgatus (strain ATCC 8482 / DSM 1447 / JCM 5826 / CCUG 4940 / NBRC 14291 / NCTC 11154) (Bacteroides vulgatus).